A 366-amino-acid chain; its full sequence is Dof zinc finger protein DOF1.3 (366 aa).

The disordered stretch occupies residues 22–103 (DPYSSSSHVL…KTTELKKPDK (82 aa)). Low complexity-rich tracts occupy residues 25-45 (SSSS…SLSL) and 56-69 (TDNT…NLNN). Composition is skewed to basic and acidic residues over residues 70–83 (ESKE…DQHS) and 91–103 (EEEK…KPDK). The Dof-type zinc-finger motif lies at 105–159 (LPCPRCNSADTKFCYYNNYNVNQPRHFCRKCQRYWTAGGSMRIVPVGSGRRKNKG). Zn(2+) contacts are provided by Cys-107, Cys-110, Cys-132, and Cys-135.

The protein resides in the nucleus. Functionally, transcription factor that binds specifically to a 5'-AA[AG]G-3' consensus core sequence. The sequence is that of Dof zinc finger protein DOF1.3 (DOF1.3) from Arabidopsis thaliana (Mouse-ear cress).